The primary structure comprises 122 residues: Small ribosomal subunit protein uS13 (122 aa).

Positions 97–122 (PVRGQRTKTNARTRKGPARTVAGKKK) are disordered.

Belongs to the universal ribosomal protein uS13 family. As to quaternary structure, part of the 30S ribosomal subunit. Forms a loose heterodimer with protein S19. Forms two bridges to the 50S subunit in the 70S ribosome.

Its function is as follows. Located at the top of the head of the 30S subunit, it contacts several helices of the 16S rRNA. In the 70S ribosome it contacts the 23S rRNA (bridge B1a) and protein L5 of the 50S subunit (bridge B1b), connecting the 2 subunits; these bridges are implicated in subunit movement. Contacts the tRNAs in the A and P-sites. The protein is Small ribosomal subunit protein uS13 of Geobacter metallireducens (strain ATCC 53774 / DSM 7210 / GS-15).